A 201-amino-acid polypeptide reads, in one-letter code: Envelope glycoprotein (201 aa).

Residues 1 to 148 (RRARYKKEPV…FNKSPWFTTL (148 aa)) are Extracellular-facing. A fusion peptide region spans residues 10 to 30 (VSLTLALLLGGLTMGGIAAGV). Residues 39 to 75 (ATQQFQQLQAAIHDDLKEVEKSITNLEKSLTSLSEVV) adopt a coiled-coil conformation. The tract at residues 76-92 (LQNRRGLDLLFLKEGGL) is immunosuppression. The CX6CC motif lies at 93-101 (CAALKEECC). Residues 149-169 (ISTVMGPLIILLLILLFGPCI) form a helical membrane-spanning segment. Cys168 carries the S-palmitoyl cysteine; by host lipid modification. The Cytoplasmic portion of the chain corresponds to 170–201 (LNRLVQFIKDRISVVQALVLTQQYHQLKTIGD). A YXXL motif; contains endocytosis signal motif is present at residues 193–196 (YHQL).

As to quaternary structure, the mature envelope protein (Env) consists of a trimer of SU-TM heterodimers attached by a labile interchain disulfide bond. Post-translationally, specific enzymatic cleavages in vivo yield mature proteins. Envelope glycoproteins are synthesized as an inactive precursor that is N-glycosylated and processed likely by host cell furin or by a furin-like protease in the Golgi to yield the mature SU and TM proteins. The cleavage site between SU and TM requires the minimal sequence [KR]-X-[KR]-R. The R-peptide is released from the C-terminus of the cytoplasmic tail of the TM protein upon particle formation as a result of proteolytic cleavage by the viral protease. Cleavage of this peptide is required for TM to become fusogenic. The transmembrane protein is palmitoylated. In terms of processing, the R-peptide is palmitoylated.

It localises to the virion membrane. The protein localises to the host cell membrane. The surface protein (SU) attaches the virus to the host cell by binding to its receptor. This interaction triggers the refolding of the transmembrane protein (TM) and is thought to activate its fusogenic potential by unmasking its fusion peptide. Fusion occurs at the host cell plasma membrane. Its function is as follows. The transmembrane protein (TM) acts as a class I viral fusion protein. Under the current model, the protein has at least 3 conformational states: pre-fusion native state, pre-hairpin intermediate state, and post-fusion hairpin state. During viral and target cell membrane fusion, the coiled coil regions (heptad repeats) assume a trimer-of-hairpins structure, positioning the fusion peptide in close proximity to the C-terminal region of the ectodomain. The formation of this structure appears to drive apposition and subsequent fusion of viral and target cell membranes. Membranes fusion leads to delivery of the nucleocapsid into the cytoplasm. This is Envelope glycoprotein (env) from Mus musculus (Mouse).